Reading from the N-terminus, the 126-residue chain is MQLSLLKAKIHRATVSHSELNYEGSIAIDGLLLEAAGLYEFEKVHIWNVTNGARFTTYAIRAEHGSGIISVNGGAARYVQVGDLVIVAAFAQMSEDEAAVFRPNLVYVDAANAMTHTNHSIPTQVA.

The active-site Schiff-base intermediate with substrate; via pyruvic acid is the Ser-25. Ser-25 carries the post-translational modification Pyruvic acid (Ser). Thr-57 is a substrate binding site. Tyr-58 serves as the catalytic Proton donor. Residue 73–75 (GGA) coordinates substrate.

It belongs to the PanD family. Heterooctamer of four alpha and four beta subunits. Pyruvate is required as a cofactor. In terms of processing, is synthesized initially as an inactive proenzyme, which is activated by self-cleavage at a specific serine bond to produce a beta-subunit with a hydroxyl group at its C-terminus and an alpha-subunit with a pyruvoyl group at its N-terminus.

It localises to the cytoplasm. The catalysed reaction is L-aspartate + H(+) = beta-alanine + CO2. Its pathway is cofactor biosynthesis; (R)-pantothenate biosynthesis; beta-alanine from L-aspartate: step 1/1. In terms of biological role, catalyzes the pyruvoyl-dependent decarboxylation of aspartate to produce beta-alanine. The polypeptide is Aspartate 1-decarboxylase (Xylella fastidiosa (strain M12)).